A 344-amino-acid chain; its full sequence is Serpentine receptor class delta-3 (344 aa).

7 consecutive transmembrane segments (helical) span residues 21–41 (IIGYIVNPLGILFNTLLIILI), 54–74 (MLHLNFALCDLFSCLAGMLAL), 102–122 (FLHVFVCHCLAHSQWILMISF), 142–162 (ICILTYLPSLLFVIVYWSDVA), 203–223 (FSAIVYMTIPCFPIYGVIVFF), 259–279 (IVPIFWLTASTFYLLALFQVV), and 287–307 (MPFRIMECMPMITPLISLYFV).

This sequence belongs to the nematode receptor-like protein srd family.

It localises to the membrane. This is Serpentine receptor class delta-3 (srd-3) from Caenorhabditis elegans.